A 445-amino-acid chain; its full sequence is DNA repair protein RadA (445 aa).

Residues 10–27 (CSNCANISNKWSGQCFDC) form a C4-type zinc finger. An ATP-binding site is contributed by 90–97 (GEPGIGKS). The RadA KNRFG motif signature appears at 249–253 (KNRFG). A lon-protease-like region spans residues 348-445 (EIYLSIAGGL…HLQELKEIIK (98 aa)).

The protein belongs to the RecA family. RadA subfamily.

Functionally, DNA-dependent ATPase involved in processing of recombination intermediates, plays a role in repairing DNA breaks. Stimulates the branch migration of RecA-mediated strand transfer reactions, allowing the 3' invading strand to extend heteroduplex DNA faster. Binds ssDNA in the presence of ADP but not other nucleotides, has ATPase activity that is stimulated by ssDNA and various branched DNA structures, but inhibited by SSB. Does not have RecA's homology-searching function. In Rickettsia prowazekii (strain Madrid E), this protein is DNA repair protein RadA.